We begin with the raw amino-acid sequence, 894 residues long: Translation initiation factor IF-2 (894 aa).

A disordered region spans residues 47 to 305 (AHLNRENGSG…GSALQQSFQK (259 aa)). Positions 68 to 82 (STLNIPGTGGKSKSV) are enriched in polar residues. Basic and acidic residues-rich tracts occupy residues 93–159 (VKRD…KDKV) and 166–219 (DMTK…KWTD). The span at 254 to 269 (GRSRNAKAARPAKKGN) shows a compositional bias: basic residues. Positions 270 to 283 (KHSESKADREEARA) are enriched in basic and acidic residues. The region spanning 393 to 562 (PRAPVVTIMG…LLQAEVLELK (170 aa)) is the tr-type G domain. Residues 402 to 409 (GHVDHGKT) are G1. A GTP-binding site is contributed by 402–409 (GHVDHGKT). Residues 427–431 (GITQH) are G2. Residues 448 to 451 (DTPG) form a G3 region. Residues 448 to 452 (DTPGH) and 502 to 505 (NKID) each bind GTP. Residues 502–505 (NKID) form a G4 region. Residues 538–540 (SAK) form a G5 region.

Belongs to the TRAFAC class translation factor GTPase superfamily. Classic translation factor GTPase family. IF-2 subfamily.

It localises to the cytoplasm. In terms of biological role, one of the essential components for the initiation of protein synthesis. Protects formylmethionyl-tRNA from spontaneous hydrolysis and promotes its binding to the 30S ribosomal subunits. Also involved in the hydrolysis of GTP during the formation of the 70S ribosomal complex. This Citrobacter koseri (strain ATCC BAA-895 / CDC 4225-83 / SGSC4696) protein is Translation initiation factor IF-2.